The primary structure comprises 1114 residues: Putative surface protein SAV2496/SAV2497 (1114 aa).

The first 50 residues, 1–50 (MRDKKGPVNKRVDFLSNKLNKYSIRKFTVGTASILIGSLMYLGTQQEAEA), serve as a signal peptide directing secretion. Disordered stretches follow at residues 76–116 (TNKD…EDTP), 440–473 (KFNP…NPLT), and 496–1088 (EYGP…TGLE). Basic and acidic residues-rich tracts occupy residues 96-116 (DTIE…EDTP), 451-461 (KVTREGQKGEK), 505-523 (GHRD…EEVP), 554-570 (SIVE…RKFN), and 579-589 (KVTREGQKGEK). The region spanning 419-501 (SAKNNNRIRK…NELTEYGPET (83 aa)) is the G5 1 domain. The 82-residue stretch at 547-628 (YGPVKGDSIV…NELTEYGPET (82 aa)) folds into the G5 2 domain. A compositionally biased stretch (low complexity) spans 590–604 (TTTPTLKNPLTGEII). Basic and acidic residues-rich tracts occupy residues 605-618 (SKGE…KDPI), 632-650 (GHRD…EEVP), 681-697 (SIVE…RKFN), 706-716 (KVTREGQKGEK), 733-746 (SKGE…KDPI), 760-778 (GHRD…EEVP), 809-825 (SIVE…RKFN), 834-844 (KVTREGQKGEK), 861-874 (SKGE…KDPV), 918-929 (KVIEEPVDDVIK), and 946-965 (FETK…RVKQ). Residues 674-756 (YGPVKGDSIV…NELTEYGPET (83 aa)) enclose the G5 3 domain. The G5 4 domain maps to 802-884 (YGPVKGDSIV…NELTEFGGEK (83 aa)). Residues 930–1012 (HGPKTGTPET…DKIVEFGGEK (83 aa)) form the G5 5 domain. Residues 968 to 982 (QPGSKTITTPITVNP) are compositionally biased toward polar residues. Positions 996–1026 (EITKQPVDKIVEFGGEKPKDPKGPENPEKPS) are enriched in basic and acidic residues. The LPXTG sorting signal motif lies at 1082–1086 (LPKTG). At Thr-1085 the chain carries Pentaglycyl murein peptidoglycan amidated threonine. The propeptide at 1086 to 1114 (GLESTQKGLIFSSIIGIAGLMLLARRRKN) is removed by sortase.

The protein localises to the secreted. The protein resides in the cell wall. The chain is Putative surface protein SAV2496/SAV2497 from Staphylococcus aureus (strain Mu50 / ATCC 700699).